A 201-amino-acid polypeptide reads, in one-letter code: UPF0301 protein MAP_0045 (201 aa).

This sequence belongs to the UPF0301 (AlgH) family.

The sequence is that of UPF0301 protein MAP_0045 from Mycolicibacterium paratuberculosis (strain ATCC BAA-968 / K-10) (Mycobacterium paratuberculosis).